The chain runs to 143 residues: Transcriptional regulator MraZ (143 aa).

SpoVT-AbrB domains follow at residues 5 to 47 and 76 to 119; these read EYQH…PQEE and ASEC…SKSE.

The protein belongs to the MraZ family. In terms of assembly, forms oligomers.

The protein resides in the cytoplasm. It is found in the nucleoid. The polypeptide is Transcriptional regulator MraZ (Listeria monocytogenes serotype 4b (strain CLIP80459)).